A 265-amino-acid polypeptide reads, in one-letter code: MEMO1 family protein Mbar_A1422 (265 aa).

It belongs to the MEMO1 family.

This is MEMO1 family protein Mbar_A1422 from Methanosarcina barkeri (strain Fusaro / DSM 804).